Reading from the N-terminus, the 697-residue chain is PHD finger protein At1g33420 (697 aa).

The PHD-type zinc finger occupies 603 to 653 (KVDCKCGTKDDDGERMLACDGCGVWHHTRCIGINNADALPSKFLCFRCIEL).

It localises to the nucleus. This Arabidopsis thaliana (Mouse-ear cress) protein is PHD finger protein At1g33420.